Consider the following 87-residue polypeptide: Small ribosomal subunit protein bS20 (87 aa).

The disordered stretch occupies residues 1-20 (MANHKSAEKRARQTIKRTER).

The protein belongs to the bacterial ribosomal protein bS20 family.

Binds directly to 16S ribosomal RNA. The protein is Small ribosomal subunit protein bS20 of Campylobacter lari (strain RM2100 / D67 / ATCC BAA-1060).